A 389-amino-acid chain; its full sequence is Probable transcription factor FL (389 aa).

2 disordered regions span residues 1 to 41 (MDPN…ANVP) and 140 to 226 (EHDM…HPFV). The segment covering 19 to 39 (PPAPAPVPPPPPPPPPPPPAN) has biased composition (pro residues). Residues 159–180 (VTGKKQAKKGSAARKGKKARRK) show a composition bias toward basic residues. The short motif at 161 to 168 (GKKQAKKG) is the Nuclear localization signal element. Over residues 190–201 (QEDEMDCCDEDG) the composition is skewed to acidic residues. DNA-binding regions lie at residues 221–225 (REHPF), 290–297 (NKPKMRHY), and 361–364 (YVPT).

This sequence belongs to the FLO/LFY family. Interacts with APO1. As to expression, in very young panicle but not in mature florets, mature leaves, roots or apical meristems.

The protein localises to the nucleus. Probable transcription factor. Together with APO1, involved in the temporal regulation of meristem size and identity during both vegetative and reproductive developments through interaction with APO1. Promotes flowering. This chain is Probable transcription factor FL, found in Oryza sativa subsp. japonica (Rice).